The following is a 1729-amino-acid chain: 182 kDa tankyrase-1-binding protein (1729 aa).

The span at 1–12 (MKVSTLRESSAM) shows a compositional bias: polar residues. The interval 1-151 (MKVSTLRESS…VRKAPAPFRP (151 aa)) is disordered. Ser-14 is modified (phosphoserine). Positions 46–63 (ALPAKPALPAKPSLLVPV) are enriched in low complexity. A compositionally biased stretch (basic and acidic residues) spans 117 to 127 (TGKEEAGKEEP). Thr-131 is subject to Phosphothreonine. Ser-178, Ser-221, and Ser-228 each carry phosphoserine. 3 disordered regions span residues 184 to 450 (GSRL…LAAL), 484 to 603 (PSGL…ESPL), and 657 to 880 (ETTQ…SSRD). The acidic stretch occupies residues 210–1572 (DEDGSTLFRG…TEILDSAMYR (1363 aa)). Basic and acidic residues predominate over residues 230-245 (AECREEHSKTPEERSL). Residue Thr-239 is modified to Phosphothreonine. Ser-287 and Ser-301 each carry phosphoserine. Residues 352-363 (PSPGLPAEGAPE) show a composition bias toward low complexity. Pro residues predominate over residues 364 to 374 (APRPSSPPPEV). Phosphoserine is present on residues Ser-429, Ser-435, Ser-437, Ser-494, and Ser-498. Low complexity-rich tracts occupy residues 500–512 (ITEASEAAEAAEA), 524–541 (VSQQGQGAGSAPSGSGSS), and 572–583 (LPTTEGTPGLPL). The residue at position 501 (Thr-501) is a Phosphothreonine. Phosphoserine occurs at positions 601, 672, 691, 695, 712, 724, 744, 762, and 806. The segment covering 738–753 (PQPSSFSPSSWCQGAS) has biased composition (polar residues). The segment covering 803–812 (ASSSQDQSKV) has biased composition (polar residues). At Thr-833 the chain carries Phosphothreonine. Ser-836, Ser-851, Ser-872, Ser-877, Ser-882, and Ser-893 each carry phosphoserine. Positions 858–872 (RDAELQDQEFGKRDS) are enriched in basic and acidic residues. Tyr-897 carries the post-translational modification Phosphotyrosine. The segment at 897 to 1083 (YASQDANEQG…ADLEDGEMGK (187 aa)) is disordered. A phosphoserine mark is found at Ser-899, Ser-920, Ser-936, and Ser-976. At Thr-979 the chain carries Phosphothreonine. A phosphoserine mark is found at Ser-983, Ser-987, Ser-1004, Ser-1008, Ser-1013, Ser-1024, Ser-1029, Ser-1054, Ser-1073, Ser-1091, Ser-1103, Ser-1133, Ser-1138, Ser-1158, Ser-1178, Ser-1248, and Ser-1253. Residues 1012 to 1021 (GSRDAGRPGE) show a composition bias toward basic and acidic residues. Over residues 1043–1054 (RDQSSWQNSDAS) the composition is skewed to polar residues. A disordered region spans residues 1240-1302 (EVGEGGGHSQ…GAVCSPGESK (63 aa)). Phosphothreonine is present on Thr-1282. Phosphoserine is present on residues Ser-1297, Ser-1328, Ser-1331, Ser-1383, and Ser-1385. Residues 1362-1561 (AREHGVGGVS…SPSQDFSFIE (200 aa)) are disordered. A compositionally biased stretch (basic and acidic residues) spans 1389–1400 (EARDPLEARELG). A compositionally biased stretch (polar residues) spans 1406 to 1419 (GPETQGEDYSSSSL). Phosphoserine is present on residues Ser-1435, Ser-1439, Ser-1450, Ser-1452, Ser-1473, Ser-1476, Ser-1503, and Ser-1506. The tract at residues 1450–1542 (SGSQGLLEEM…SDQGPAQTSR (93 aa)) is tankyrase-binding. Thr-1518 carries the phosphothreonine modification. Ser-1533, Ser-1545, and Ser-1558 each carry phosphoserine. At Thr-1563 the chain carries Phosphothreonine. The interval 1575 to 1729 (ANLGRKRGHR…QALKLKKKKV (155 aa)) is disordered. Positions 1577–1586 (LGRKRGHRAP) are enriched in basic residues. Basic and acidic residues predominate over residues 1602–1615 (SDAHLFQDSTEPRA). A phosphoserine mark is found at Ser-1620, Ser-1621, and Ser-1631. A Nuclear localization signal motif is present at residues 1629–1635 (PQSRRTR). Position 1644 is an N6-methyllysine (Lys-1644). Phosphoserine occurs at positions 1652, 1666, and 1715. Residues 1665-1679 (RSAEEGELAESKSSQ) show a composition bias toward basic and acidic residues. A Nuclear localization signal motif is present at residues 1723–1729 (KLKKKKV).

In terms of assembly, binds to the ANK repeat domain of TNKS1 and TNKS2. ADP-ribosylated by TNKS1 (in vitro). In terms of tissue distribution, detected in testis, ovary, lung, skeletal muscle, heart, prostate and pancreas, and at very low levels in brain and peripheral blood leukocytes.

It is found in the nucleus. The protein localises to the cytoplasm. Its subcellular location is the cytoskeleton. It localises to the chromosome. In Homo sapiens (Human), this protein is 182 kDa tankyrase-1-binding protein (TNKS1BP1).